The sequence spans 147 residues: Ribonuclease H (147 aa).

The region spanning 1-142 (MKKVSIYTDG…CDKLATDEIK (142 aa)) is the RNase H type-1 domain. 4 residues coordinate Mg(2+): Asp9, Glu47, Asp69, and Asp134.

This sequence belongs to the RNase H family. Monomer. Mg(2+) is required as a cofactor.

The protein localises to the cytoplasm. The catalysed reaction is Endonucleolytic cleavage to 5'-phosphomonoester.. Functionally, endonuclease that specifically degrades the RNA of RNA-DNA hybrids. This Acetivibrio thermocellus (strain ATCC 27405 / DSM 1237 / JCM 9322 / NBRC 103400 / NCIMB 10682 / NRRL B-4536 / VPI 7372) (Clostridium thermocellum) protein is Ribonuclease H.